We begin with the raw amino-acid sequence, 154 residues long: Photosystem II extrinsic protein U, chloroplastic (154 aa).

A chloroplast-targeting transit peptide spans 1–36 (MAFISTPLGKVTVKSATVSANRRGLRMQSDSEPVVS). A thylakoid-targeting transit peptide spans 37 to 61 (RRALLSGALAAAVAAALARARPAQA).

This sequence belongs to the PsbU family. PSII is composed of 1 copy each of membrane proteins PsbA, PsbB, PsbC, PsbD, PsbE, PsbF, PsbH, PsbI, PsbJ, PsbK, PsbL, PsbM, PsbT, PsbY, PsbZ, Psb30/Ycf12, at least 3 peripheral proteins of the oxygen-evolving complex and a large number of cofactors. It forms dimeric complexes. The extrinsic subunits in red algae are PsbO (OEC33), PsbQ', cytochrome c-550 and PsbU. Post-translationally, predicted to be translocated into the thylakoid lumen by the Tat system. The position of the first transit peptide cleavage has not been experimentally proven.

The protein resides in the plastid. It is found in the chloroplast thylakoid membrane. One of the extrinsic, lumenal subunits of photosystem II (PSII). PSII is a light-driven water plastoquinone oxidoreductase, using light energy to abstract electrons from H(2)O, generating a proton gradient subsequently used for ATP formation. The extrinsic proteins stabilize the structure of photosystem II oxygen-evolving complex (OEC), the ion environment of oxygen evolution and protect the OEC against heat-induced inactivation. This Cyanidium caldarium (Red alga) protein is Photosystem II extrinsic protein U, chloroplastic.